Here is a 454-residue protein sequence, read N- to C-terminus: Allantoinase (454 aa).

6 residues coordinate Zn(2+): H58, H60, K149, H189, H245, and D318. Position 149 is an N6-carboxylysine (K149).

The protein belongs to the metallo-dependent hydrolases superfamily. Allantoinase family. As to quaternary structure, homotetramer. The cofactor is Zn(2+). In terms of processing, carboxylation allows a single lysine to coordinate two zinc ions.

It carries out the reaction (S)-allantoin + H2O = allantoate + H(+). The protein operates within nitrogen metabolism; (S)-allantoin degradation; allantoate from (S)-allantoin: step 1/1. Its function is as follows. Catalyzes the conversion of allantoin (5-ureidohydantoin) to allantoic acid by hydrolytic cleavage of the five-member hydantoin ring. The protein is Allantoinase of Enterococcus faecalis (strain ATCC 700802 / V583).